A 323-amino-acid chain; its full sequence is DNA-directed RNA polymerase subunit alpha (323 aa).

Residues 1 to 225 (MLDIAMPKIE…QYSQTIADFN (225 aa)) are alpha N-terminal domain (alpha-NTD). An alpha C-terminal domain (alpha-CTD) region spans residues 246 to 323 (IYDTPIEELD…SHAARAEIEG (78 aa)).

This sequence belongs to the RNA polymerase alpha chain family. As to quaternary structure, homodimer. The RNAP catalytic core consists of 2 alpha, 1 beta, 1 beta' and 1 omega subunit. When a sigma factor is associated with the core the holoenzyme is formed, which can initiate transcription.

It catalyses the reaction RNA(n) + a ribonucleoside 5'-triphosphate = RNA(n+1) + diphosphate. In terms of biological role, DNA-dependent RNA polymerase catalyzes the transcription of DNA into RNA using the four ribonucleoside triphosphates as substrates. The chain is DNA-directed RNA polymerase subunit alpha from Roseiflexus sp. (strain RS-1).